A 108-amino-acid polypeptide reads, in one-letter code: Nucleoid-associated protein BMASAVP1_A1850 (108 aa).

The interval 84 to 108 (EATSQEKMSGMTSGLPLPPGFKLPF) is disordered. Residues 85-95 (ATSQEKMSGMT) show a composition bias toward polar residues. Residues 99–108 (PLPPGFKLPF) are compositionally biased toward pro residues.

This sequence belongs to the YbaB/EbfC family. Homodimer.

Its subcellular location is the cytoplasm. The protein resides in the nucleoid. Binds to DNA and alters its conformation. May be involved in regulation of gene expression, nucleoid organization and DNA protection. This Burkholderia mallei (strain SAVP1) protein is Nucleoid-associated protein BMASAVP1_A1850.